The following is a 160-amino-acid chain: UPF0262 protein Mmar10_1128 (160 aa).

It belongs to the UPF0262 family.

The chain is UPF0262 protein Mmar10_1128 from Maricaulis maris (strain MCS10) (Caulobacter maris).